The sequence spans 201 residues: Small ribosomal subunit protein uS4c (201 aa).

One can recognise an S4 RNA-binding domain in the interval 89–150; it reads MRLDNILFRL…KQRSKVLIQN (62 aa).

Belongs to the universal ribosomal protein uS4 family. In terms of assembly, part of the 30S ribosomal subunit. Contacts protein S5. The interaction surface between S4 and S5 is involved in control of translational fidelity.

The protein localises to the plastid. It localises to the chloroplast. Its function is as follows. One of the primary rRNA binding proteins, it binds directly to 16S rRNA where it nucleates assembly of the body of the 30S subunit. Functionally, with S5 and S12 plays an important role in translational accuracy. The protein is Small ribosomal subunit protein uS4c (rps4) of Dioscorea elephantipes (Elephant's foot yam).